A 473-amino-acid polypeptide reads, in one-letter code: Major myo-inositol transporter IolT (473 aa).

Transmembrane regions (helical) follow at residues 14 to 34 (IILV…VLNG), 49 to 69 (AFTE…GAVF), 83 to 103 (ILFL…APNV), 111 to 131 (FVLG…LAEM), 146 to 166 (LMIV…GTTM), 172 to 192 (VWRF…FGMI), 256 to 276 (IVFI…NSIM), 295 to 315 (IGNI…IWLL), 325 to 345 (MTGL…SLVL), 350 to 370 (ALPY…QGAI), 389 to 409 (LGMG…SFTF), and 411 to 431 (ILLA…LGIC).

Belongs to the major facilitator superfamily. Sugar transporter (TC 2.A.1.1) family.

It is found in the cell membrane. It functions in the pathway polyol metabolism; myo-inositol degradation into acetyl-CoA. Its function is as follows. Major myo-inositol uptake transporter. The protein is Major myo-inositol transporter IolT (iolT) of Bacillus subtilis (strain 168).